The sequence spans 199 residues: Holliday junction resolvase RecU (199 aa).

Mg(2+) contacts are provided by T82, D84, E97, and Q116.

It belongs to the RecU family. Requires Mg(2+) as cofactor.

Its subcellular location is the cytoplasm. It catalyses the reaction Endonucleolytic cleavage at a junction such as a reciprocal single-stranded crossover between two homologous DNA duplexes (Holliday junction).. Its function is as follows. Endonuclease that resolves Holliday junction intermediates in genetic recombination. Cleaves mobile four-strand junctions by introducing symmetrical nicks in paired strands. Promotes annealing of linear ssDNA with homologous dsDNA. Required for DNA repair, homologous recombination and chromosome segregation. In Streptococcus agalactiae serotype Ia (strain ATCC 27591 / A909 / CDC SS700), this protein is Holliday junction resolvase RecU.